Consider the following 365-residue polypeptide: tRNA-specific 2-thiouridylase MnmA (365 aa).

ATP is bound by residues 6 to 13 (AMSGGVDS) and L32. C101 (nucleophile) is an active-site residue. The cysteines at positions 101 and 199 are disulfide-linked. Position 125 (G125) interacts with ATP. The interval 149–151 (KDQ) is interaction with tRNA. C199 (cysteine persulfide intermediate) is an active-site residue.

It belongs to the MnmA/TRMU family.

The protein localises to the cytoplasm. The enzyme catalyses S-sulfanyl-L-cysteinyl-[protein] + uridine(34) in tRNA + AH2 + ATP = 2-thiouridine(34) in tRNA + L-cysteinyl-[protein] + A + AMP + diphosphate + H(+). In terms of biological role, catalyzes the 2-thiolation of uridine at the wobble position (U34) of tRNA, leading to the formation of s(2)U34. This Corynebacterium efficiens (strain DSM 44549 / YS-314 / AJ 12310 / JCM 11189 / NBRC 100395) protein is tRNA-specific 2-thiouridylase MnmA.